Here is a 122-residue protein sequence, read N- to C-terminus: MIQQETMLQVGDNTGAKKVLCVKVLGGSTRRYASVGDIIVASVKEASPGGVVKKGDLVKAVVVRTKKEIRRADGSYIAFSENAAVIIDDNNNPKGTRIFGPVARELREKNFMKIISLAPEVL.

The protein belongs to the universal ribosomal protein uL14 family. In terms of assembly, part of the 50S ribosomal subunit. Forms a cluster with proteins L3 and L19. In the 70S ribosome, L14 and L19 interact and together make contacts with the 16S rRNA in bridges B5 and B8.

Binds to 23S rRNA. Forms part of two intersubunit bridges in the 70S ribosome. In Syntrophomonas wolfei subsp. wolfei (strain DSM 2245B / Goettingen), this protein is Large ribosomal subunit protein uL14.